We begin with the raw amino-acid sequence, 323 residues long: Oligodendrocyte transcription factor 2 (323 aa).

Polar residues-rich tracts occupy residues 1-13 (MDSDASLVSSRPS) and 27-45 (KGSSGSAFTGGTVSSSTPS). Positions 1–107 (MDSDASLVSS…KKQMTEPELQ (107 aa)) are disordered. Over residues 76-93 (KSSSSSTSSSTSSAAASS) the composition is skewed to low complexity. Residues 108-162 (QLRLKINSRERKRMHDLNIAMDGLREVMPYAHGPSVRKLSKIATLLLARNYILML) enclose the bHLH domain.

In terms of assembly, interacts with NKX2-2. Interacts with ZNF488. As to expression, expressed in the brain, in oligodendrocytes. Strongly expressed in oligodendrogliomas, while expression is weak to moderate in astrocytomas. Expression in glioblastomas highly variable.

It is found in the nucleus. It localises to the cytoplasm. In terms of biological role, required for oligodendrocyte and motor neuron specification in the spinal cord, as well as for the development of somatic motor neurons in the hindbrain. Functions together with ZNF488 to promote oligodendrocyte differentiation. Cooperates with OLIG1 to establish the pMN domain of the embryonic neural tube. Antagonist of V2 interneuron and of NKX2-2-induced V3 interneuron development. The sequence is that of Oligodendrocyte transcription factor 2 (OLIG2) from Homo sapiens (Human).